The sequence spans 254 residues: Hydroxypyruvate/pyruvate aldolase (254 aa).

The active-site Proton acceptor is the H47. Residues E151 and D177 each contribute to the a divalent metal cation site.

Belongs to the HpcH/HpaI aldolase family. It depends on a divalent metal cation as a cofactor.

The catalysed reaction is D-glyceraldehyde + pyruvate = 2-dehydro-3-deoxy-L-galactonate. Functionally, aldolase which can catalyze in vitro the aldolisation reaction between hydroxypyruvate (HPA) or pyruvate (PA) and D-glyceraldehyde (D-GA). The condensation of pyruvate and D-glyceraldehyde produces 2-dehydro-3-deoxy-L-galactonate as the major product. Has weak activity with hydroxypyruvate and D-glyceraldehyde. This Chromohalobacter salexigens (strain ATCC BAA-138 / DSM 3043 / CIP 106854 / NCIMB 13768 / 1H11) protein is Hydroxypyruvate/pyruvate aldolase.